The following is a 499-amino-acid chain: GTPase Der (499 aa).

The EngA-type G 1 domain occupies 3–166 (PVIALVGRPN…QALGIFPKDN (164 aa)). GTP contacts are provided by residues 9 to 16 (GRPNVGKS), 56 to 60 (DTGGI), and 118 to 121 (NKVD). A disordered region spans residues 166-199 (NADENAEGEEGGELAEGEEVVAEGQEPKRIPGPS). Acidic residues predominate over residues 168–186 (DENAEGEEGGELAEGEEVV). Positions 190-199 (QEPKRIPGPS) are enriched in basic and acidic residues. The region spanning 204–377 (IKIAIIGRPN…SVQAAFKSAI (174 aa)) is the EngA-type G 2 domain. Residues 210–217 (GRPNVGKS), 257–261 (DTAGV), and 322–325 (NKWD) each bind GTP. Residues 378–462 (TRWPTSRLTQ…PIRIEYKGGD (85 aa)) enclose the KH-like domain. Residues 459 to 472 (KGGDNPYEGKKNTL) show a composition bias toward basic and acidic residues. Residues 459 to 499 (KGGDNPYEGKKNTLTDRQVNKKRRLMSHHKKAEKKRRDKKR) are disordered. Basic residues predominate over residues 478-499 (NKKRRLMSHHKKAEKKRRDKKR).

This sequence belongs to the TRAFAC class TrmE-Era-EngA-EngB-Septin-like GTPase superfamily. EngA (Der) GTPase family. In terms of assembly, associates with the 50S ribosomal subunit.

In terms of biological role, GTPase that plays an essential role in the late steps of ribosome biogenesis. This Stutzerimonas stutzeri (strain A1501) (Pseudomonas stutzeri) protein is GTPase Der.